We begin with the raw amino-acid sequence, 145 residues long: Ribosome maturation factor RimP (145 aa).

This sequence belongs to the RimP family.

It is found in the cytoplasm. Functionally, required for maturation of 30S ribosomal subunits. This Borrelia garinii subsp. bavariensis (strain ATCC BAA-2496 / DSM 23469 / PBi) (Borreliella bavariensis) protein is Ribosome maturation factor RimP.